The primary structure comprises 351 residues: Uroporphyrinogen decarboxylase (351 aa).

Substrate contacts are provided by residues 27–31 (RQAGR), Asp77, Tyr154, Thr209, and His327.

Belongs to the uroporphyrinogen decarboxylase family. In terms of assembly, homodimer.

It localises to the cytoplasm. It carries out the reaction uroporphyrinogen III + 4 H(+) = coproporphyrinogen III + 4 CO2. The protein operates within porphyrin-containing compound metabolism; protoporphyrin-IX biosynthesis; coproporphyrinogen-III from 5-aminolevulinate: step 4/4. In terms of biological role, catalyzes the decarboxylation of four acetate groups of uroporphyrinogen-III to yield coproporphyrinogen-III. The protein is Uroporphyrinogen decarboxylase of Thioalkalivibrio sulfidiphilus (strain HL-EbGR7).